Here is a 557-residue protein sequence, read N- to C-terminus: MHLASLLSSCSLLLLLGALPGWAANNDPIEKVIEGINRGLSSAEREVGKALEGINNGITQAGREVEKVFNGLSSMGNQAGKELEKGVQGLNRGLDKVAHGINNGVGHTGKEAEKLAHGVNHAAGQVGKEADTVIQGVPHGVNQAGSDAGRFGQGAHHATGQAGKEAEKFGQGAHHAAGQFGNEAEKFGQGAHHAAGQFGNEAEKFGQGVHHAAGQFGNEAEKFGQGVHHAAGQAGKEGEKIVQGVQHGVNQAGKEAEKFGQGVHHGAGQFGNEAEKFGQGVHHAAGQAGKEGEKIVQGVQHGVNQAGKEAEKFGQGVHHGAGQFGNEAEKFGQGVHHAAGQAGKEGEKIVQGVQHGVNQAGKEAEKFGKDVHYAAGQAGKEGEKIVQGVQHGVNQAGKEAEKFGQGVHHAAGQFGKEAEKFGQGAHHAAEQAGKQAGKVAQGVHDGVNQAGKEAEKLGHGVNHAAGQAGKEAEKLGQGVHHAAGQAGKQEDRLQQNVHNGVNQAGKEANQLLNDGHPGGSTTQHGGAATTTLTSGASVNKPFMALSVLWKSVTSIIP.

Positions 1-23 (MHLASLLSSCSLLLLLGALPGWA) are cleaved as a signal peptide. Disordered stretches follow at residues 150-175 (RFGQ…GAHH), 422-441 (GQGA…KVAQ), 464-490 (AAGQ…GKQE), and 509-533 (NQLL…TTLT). The span at 153–175 (QGAHHATGQAGKEAEKFGQGAHH) shows a compositional bias: low complexity. The segment covering 476-487 (GQGVHHAAGQAG) has biased composition (low complexity).

It is found in the secreted. The protein is Suprabasin (SBSN) of Bos taurus (Bovine).